Consider the following 225-residue polypeptide: Ribonuclease 3 (225 aa).

The 123-residue stretch at 5-127 (IDKLERKLGY…IIGAIYLDSD (123 aa)) folds into the RNase III domain. Glu-40 contributes to the Mg(2+) binding site. The active site involves Asp-44. Positions 113 and 116 each coordinate Mg(2+). Residue Glu-116 is part of the active site. The region spanning 154-224 (DPKTRLQEFL…AETALEQLTN (71 aa)) is the DRBM domain.

Belongs to the ribonuclease III family. Homodimer. The cofactor is Mg(2+).

The protein localises to the cytoplasm. The catalysed reaction is Endonucleolytic cleavage to 5'-phosphomonoester.. Functionally, digests double-stranded RNA. Involved in the processing of primary rRNA transcript to yield the immediate precursors to the large and small rRNAs (23S and 16S). Processes some mRNAs, and tRNAs when they are encoded in the rRNA operon. Processes pre-crRNA and tracrRNA of type II CRISPR loci if present in the organism. The sequence is that of Ribonuclease 3 from Vibrio campbellii (strain ATCC BAA-1116).